Reading from the N-terminus, the 265-residue chain is Hydroxyethylthiazole kinase (265 aa).

Methionine 43 is a binding site for substrate. ATP is bound by residues lysine 118 and threonine 165. Glycine 192 is a substrate binding site.

The protein belongs to the Thz kinase family. Mg(2+) serves as cofactor.

It carries out the reaction 5-(2-hydroxyethyl)-4-methylthiazole + ATP = 4-methyl-5-(2-phosphooxyethyl)-thiazole + ADP + H(+). Its pathway is cofactor biosynthesis; thiamine diphosphate biosynthesis; 4-methyl-5-(2-phosphoethyl)-thiazole from 5-(2-hydroxyethyl)-4-methylthiazole: step 1/1. Functionally, catalyzes the phosphorylation of the hydroxyl group of 4-methyl-5-beta-hydroxyethylthiazole (THZ). The protein is Hydroxyethylthiazole kinase of Pyrococcus horikoshii (strain ATCC 700860 / DSM 12428 / JCM 9974 / NBRC 100139 / OT-3).